Reading from the N-terminus, the 249-residue chain is Transmembrane protein 150C (249 aa).

The Cytoplasmic segment spans residues 1 to 9 (MDGKKCSVW). The chain crosses the membrane as a helical span at residues 10–30 (MFLPLVFTVFTSAGLWIVYFI). Topologically, residues 31-64 (AVEDDKIFPLNSAERKPGVKHAPYISIAGDEPPA) are extracellular. A helical transmembrane segment spans residues 65 to 85 (SCVFSQVMNMAAFLALVVAVL). The Cytoplasmic segment spans residues 86-97 (RFIQLKPKVLNP). A helical membrane pass occupies residues 98 to 118 (WLNISGLVALCLASFGMTLLG). Residues 119–130 (NFQLTNDEEIHN) lie on the Extracellular side of the membrane. A helical membrane pass occupies residues 131–151 (VGTSLTFGFGTLTCWIQAALT). The Cytoplasmic segment spans residues 152-168 (LKVNIKNEGRKVGIPRV). A helical membrane pass occupies residues 169–189 (ILSASITLCVVLYFILMAQGI). The Extracellular portion of the chain corresponds to 190 to 192 (HMY). A helical membrane pass occupies residues 193–213 (AARVQWGLVMCFLSYFGTFAV). At 214–249 (EFRHYRYEIVCSEYQENFLSFSESLSEASEYQTDQV) the chain is on the cytoplasmic side.

This sequence belongs to the DRAM/TMEM150 family.

It is found in the cell membrane. The protein resides in the lysosome membrane. The catalysed reaction is Ca(2+)(in) = Ca(2+)(out). The enzyme catalyses Na(+)(in) = Na(+)(out). It carries out the reaction K(+)(in) = K(+)(out). It catalyses the reaction Mg(2+)(in) = Mg(2+)(out). Nonselective cationic channel with high permeability to Ca(2+). Component of a mechanosensitive cation channel. Confers mechanically activated (MA) currents with slow inactivation kinetics. May contribute to proprioception. In Bos taurus (Bovine), this protein is Transmembrane protein 150C (TMEM150C).